Reading from the N-terminus, the 528-residue chain is Low affinity inorganic phosphate transporter 4 (528 aa).

Over 1-18 (MALEVLEALDSARTQWYH) the chain is Cytoplasmic. The helical transmembrane segment at 19–39 (VTAIVIAGMGFFTDAYDLFCI) threads the bilayer. Topologically, residues 40–68 (TTVSKLLGRLYYFDPSTGKPGKLPNNVNN) are extracellular. Residues 69 to 89 (LVTGVALVGTLSGQLFFGYLG) traverse the membrane as a helical segment. At 90-96 (DKLGRKK) the chain is on the cytoplasmic side. Residues 97 to 117 (VYGVTLILMVACAICSGLSFG) form a helical membrane-spanning segment. The Extracellular portion of the chain corresponds to 118–122 (ASAKS). A helical transmembrane segment spans residues 123–143 (VMGTLCFFRFWLGFGIGGDYP). The Cytoplasmic segment spans residues 144–158 (LSATIMSEYANKRTR). A helical membrane pass occupies residues 159-179 (GAFIAAVFAMQGVGIIFAGLV). At 180–208 (SMCLSAGFKASYHAPSFHDDPIMSTQPQG) the chain is on the extracellular side. The helical transmembrane segment at 209-229 (DLMWRLVLMIGAVPAAMTYYW) threads the bilayer. Residues 230 to 292 (RMKMPETGRY…NEFFTRHGRH (63 aa)) lie on the Cytoplasmic side of the membrane. A helical membrane pass occupies residues 293 to 313 (LIGTMTSWFLLDIAFYSQNLT). At 314-341 (QKDIFPAMGLIDKDFEMNAIQEVFETSR) the chain is on the extracellular side. Residues 342 to 362 (AMFVIALFGTFPGYWFTVFFI) form a helical membrane-spanning segment. The Cytoplasmic portion of the chain corresponds to 363–371 (EKLGRYKIQ). Residues 372–392 (LIGFFMMSVFMFIIGVKYDYL) form a helical membrane-spanning segment. At 393 to 401 (RNENSHMFA) the chain is on the extracellular side. The helical transmembrane segment at 402-422 (LLYGLTFFFANFGPNSTTFVL) threads the bilayer. Residues 423 to 433 (PAELFPTRVRS) are Cytoplasmic-facing. The helical transmembrane segment at 434–454 (TCHALSAAAGKAGAMVGAFGI) threads the bilayer. Residues 455 to 467 (QNYTQKGEQKQIK) are Extracellular-facing. The N-linked (GlcNAc...) asparagine glycan is linked to Asn-456. A helical membrane pass occupies residues 468–488 (HAMMILAVTNLIGFFCSFLVT). The Cytoplasmic portion of the chain corresponds to 489–528 (ETKGRSLEEISGEDGRESELTPTPPNNRVPTRQEPRSETM). 2 stretches are compositionally biased toward basic and acidic residues: residues 496-507 (EEISGEDGRESE) and 519-528 (TRQEPRSETM). The disordered stretch occupies residues 496–528 (EEISGEDGRESELTPTPPNNRVPTRQEPRSETM).

Belongs to the major facilitator superfamily. Phosphate:H(+) symporter (TC 2.A.1.9) family. Expressed only in mycorrhizal roots, exclusively in cortical cells containing arbuscules, upon arbuscular mycorrhizal (AM) symbiosis with AM fungi (e.g. Gigaspora margarita and Funnelliformis mosseae). Also observed in root tips of non-mycorrhizal roots, in a phosphate (Pi) depended-manner, highest expression levels being observed in low Pi conditions.

The protein localises to the cell membrane. It carries out the reaction phosphate(in) + H(+)(in) = phosphate(out) + H(+)(out). Its function is as follows. Low-affinity transporter for external inorganic phosphate (Pi) probably involved in the acquisition of phosphate released by arbuscular mycorrhizal (AM) fungi (e.g. Gigaspora margarita and Funnelliformis mosseae) during AM symbiosis; required for propper mycorrhizal arbuscule morphology. Acts as a Pi-sensing machinery at the root tip level, independently of AM fungi, involved in the regulation of early root branching and lateral roots formation. In Lotus japonicus (Lotus corniculatus var. japonicus), this protein is Low affinity inorganic phosphate transporter 4.